The following is a 616-amino-acid chain: Chaperone protein HscA (616 aa).

Belongs to the heat shock protein 70 family.

Chaperone involved in the maturation of iron-sulfur cluster-containing proteins. Has a low intrinsic ATPase activity which is markedly stimulated by HscB. Involved in the maturation of IscU. The sequence is that of Chaperone protein HscA from Salmonella paratyphi C (strain RKS4594).